A 162-amino-acid polypeptide reads, in one-letter code: Cyclic pyranopterin monophosphate synthase (162 aa).

Substrate is bound by residues 75–77 (LCH) and 113–114 (ME). The active site involves D128.

It belongs to the MoaC family. As to quaternary structure, homohexamer; trimer of dimers.

The catalysed reaction is (8S)-3',8-cyclo-7,8-dihydroguanosine 5'-triphosphate = cyclic pyranopterin phosphate + diphosphate. It participates in cofactor biosynthesis; molybdopterin biosynthesis. Catalyzes the conversion of (8S)-3',8-cyclo-7,8-dihydroguanosine 5'-triphosphate to cyclic pyranopterin monophosphate (cPMP). The sequence is that of Cyclic pyranopterin monophosphate synthase from Xanthobacter autotrophicus (strain ATCC BAA-1158 / Py2).